The chain runs to 325 residues: Glutarate 2-hydroxylase (325 aa).

Fe cation-binding residues include His160, Asp162, and His292.

Belongs to the glutarate hydroxylase family. As to quaternary structure, homotetramer. Fe(2+) serves as cofactor.

It catalyses the reaction glutarate + 2-oxoglutarate + O2 = (S)-2-hydroxyglutarate + succinate + CO2. It functions in the pathway amino-acid degradation. Acts as an alpha-ketoglutarate-dependent dioxygenase catalyzing hydroxylation of glutarate (GA) to L-2-hydroxyglutarate (L2HG). Functions in a L-lysine degradation pathway that proceeds via cadaverine, glutarate and L-2-hydroxyglutarate. This Escherichia coli O17:K52:H18 (strain UMN026 / ExPEC) protein is Glutarate 2-hydroxylase.